The sequence spans 491 residues: Cobyric acid synthase (491 aa).

One can recognise a GATase cobBQ-type domain in the interval 249–439 (PIDIAVIKLP…IHGVFDGVEF (191 aa)). Cys-329 acts as the Nucleophile in catalysis. His-431 is an active-site residue.

Belongs to the CobB/CobQ family. CobQ subfamily.

It participates in cofactor biosynthesis; adenosylcobalamin biosynthesis. Its function is as follows. Catalyzes amidations at positions B, D, E, and G on adenosylcobyrinic A,C-diamide. NH(2) groups are provided by glutamine, and one molecule of ATP is hydrogenolyzed for each amidation. The protein is Cobyric acid synthase of Clostridium tetani (strain Massachusetts / E88).